We begin with the raw amino-acid sequence, 525 residues long: Exoglucanase 1 (525 aa).

A signal peptide spans 1–18 (MRTAKFATLAALVASAAA). The catalytic stretch occupies residues 19 to 467 (QQACSLTTER…AGNGGNNGGN (449 aa)). The active-site Nucleophile is glutamate 231. Glutamate 236 functions as the Proton donor in the catalytic mechanism. A glycan (N-linked (GlcNAc...) asparagine) is linked at asparagine 289. The interval 454–492 (GLPGAGNGGNNGGNPPPPTTTTSSAPATTTTASAGPKAG) is disordered. The segment covering 456-465 (PGAGNGGNNG) has biased composition (gly residues). The interval 468 to 489 (PPPPTTTTSSAPATTTTASAGP) is linker. The span at 473–489 (TTTSSAPATTTTASAGP) shows a compositional bias: low complexity. A CBM1 domain is found at 489 to 525 (PKAGRWQQCGGIGFTGPTQCEEPYICTKLNDWYSQCL). 2 disulfides stabilise this stretch: cysteine 497-cysteine 514 and cysteine 508-cysteine 524.

The protein belongs to the glycosyl hydrolase 7 (cellulase C) family.

The catalysed reaction is Hydrolysis of (1-&gt;4)-beta-D-glucosidic linkages in cellulose and cellotetraose, releasing cellobiose from the non-reducing ends of the chains.. Its function is as follows. The biological conversion of cellulose to glucose generally requires three types of hydrolytic enzymes: (1) Endoglucanases which cut internal beta-1,4-glucosidic bonds; (2) Exocellobiohydrolases that cut the disaccharide cellobiose from the non-reducing end of the cellulose polymer chain; (3) Beta-1,4-glucosidases which hydrolyze the cellobiose and other short cello-oligosaccharides to glucose. The chain is Exoglucanase 1 (CBH-1) from Humicola insolens (Soft-rot fungus).